A 245-amino-acid polypeptide reads, in one-letter code: Ribosomal RNA small subunit methyltransferase G (245 aa).

S-adenosyl-L-methionine-binding positions include G79, F84, 130–131 (AE), and R150.

The protein belongs to the methyltransferase superfamily. RNA methyltransferase RsmG family.

The protein resides in the cytoplasm. Its function is as follows. Specifically methylates the N7 position of a guanine in 16S rRNA. The polypeptide is Ribosomal RNA small subunit methyltransferase G (Limosilactobacillus fermentum (strain NBRC 3956 / LMG 18251) (Lactobacillus fermentum)).